The chain runs to 370 residues: Protein-tyrosine sulfotransferase 1 (370 aa).

The Cytoplasmic segment spans residues 1–8; that stretch reads MVGKLKQN. A helical; Signal-anchor for type II membrane protein membrane pass occupies residues 9-25; that stretch reads LLLACLVISSVTVFYLG. At 26–370 the chain is on the lumenal side; the sequence is QHAMECHHRI…KEKPQTEQVE (345 aa). Asparagine 60 is a glycosylation site (N-linked (GlcNAc...) asparagine). 79–83 provides a ligand contact to 3'-phosphoadenylyl sulfate; it reads RSGTT. A disulfide bridge connects residues cysteine 97 and cysteine 157. Catalysis depends on glutamate 100, which acts as the Proton donor/acceptor. Positions 102 to 106 are interaction with peptide substrate; it reads RVIPR. Positions 184, 192, and 196 each coordinate 3'-phosphoadenylyl sulfate. An intrachain disulfide couples cysteine 226 to cysteine 234. Tyrosine 239 contacts 3'-phosphoadenylyl sulfate. An N-linked (GlcNAc...) asparagine glycan is attached at asparagine 262. 3'-phosphoadenylyl sulfate-binding positions include 286-295 and lysine 301; that span reads STDQVIKPVN.

This sequence belongs to the protein sulfotransferase family. Homodimer. Can also form heterodimers with TPST2. In terms of processing, N-glycosylated. As to expression, ubiquitous. Detected in heart, brain, lung, liver, spleen, kidney, skeletal muscle and testis.

The protein localises to the golgi apparatus membrane. It catalyses the reaction L-tyrosyl-[protein] + 3'-phosphoadenylyl sulfate = O-sulfo-L-tyrosine-[protein] + adenosine 3',5'-bisphosphate + H(+). In terms of biological role, catalyzes the O-sulfation of tyrosine residues within acidic motifs of polypeptides, using 3'-phosphoadenylyl sulfate (PAPS) as cosubstrate. This is Protein-tyrosine sulfotransferase 1 (Tpst1) from Mus musculus (Mouse).